Reading from the N-terminus, the 381-residue chain is Homoserine O-succinyltransferase (381 aa).

The region spanning 53–361 (ILICHALSGS…DSVHGHDAFL (309 aa)) is the AB hydrolase-1 domain. Serine 157 (nucleophile) is an active-site residue. Arginine 227 serves as a coordination point for substrate. Residues aspartate 324 and histidine 357 contribute to the active site. Substrate is bound at residue aspartate 358.

This sequence belongs to the AB hydrolase superfamily. MetX family. Homodimer.

It is found in the cytoplasm. It carries out the reaction L-homoserine + succinyl-CoA = O-succinyl-L-homoserine + CoA. It functions in the pathway amino-acid biosynthesis; L-methionine biosynthesis via de novo pathway; O-succinyl-L-homoserine from L-homoserine: step 1/1. Functionally, transfers a succinyl group from succinyl-CoA to L-homoserine, forming succinyl-L-homoserine. In Saccharophagus degradans (strain 2-40 / ATCC 43961 / DSM 17024), this protein is Homoserine O-succinyltransferase.